The primary structure comprises 291 residues: ATP synthase gamma chain (291 aa).

It belongs to the ATPase gamma chain family. F-type ATPases have 2 components, CF(1) - the catalytic core - and CF(0) - the membrane proton channel. CF(1) has five subunits: alpha(3), beta(3), gamma(1), delta(1), epsilon(1). CF(0) has three main subunits: a, b and c.

The protein localises to the cell inner membrane. In terms of biological role, produces ATP from ADP in the presence of a proton gradient across the membrane. The gamma chain is believed to be important in regulating ATPase activity and the flow of protons through the CF(0) complex. This chain is ATP synthase gamma chain, found in Methylibium petroleiphilum (strain ATCC BAA-1232 / LMG 22953 / PM1).